The chain runs to 366 residues: MWPLSHRHLCLAFLLVCVLSAISFFLHIHQDSFPHGLGLSVLCPDRRLVTHPVAIFCLPGTPMSPNTSSPCPQHAASLSGTWTIYPDGRFGNQMGQYATLLALAQLNGRQAFILPAMHAALAPVFRITLPVLAPEVDSRTPWRELRLHDWMSEEYADLGDPFLKLSGFPCSWTFFHHLREQIRSEFTLHDHLREEAQSVLRRLHLGRSGDRPRTFVGVHVRRGDYLQVMPQRWRGVVGNSAYLREAMDWFRARHEAPVFVVTSNGMEWCRENIDASKGDVVFAGDGQEASPWKDFALLTQCNHTIMTIGTFGFWAAYLAGGDTVYLANFTLPDSEFLKIFKPEAAFLPEWVGINADLSPLWTLAEP.

Over 1–8 (MWPLSHRH) the chain is Cytoplasmic. The chain crosses the membrane as a helical; Signal-anchor for type II membrane protein span at residues 9-25 (LCLAFLLVCVLSAISFF). Residues 26 to 366 (LHIHQDSFPH…LSPLWTLAEP (341 aa)) lie on the Lumenal side of the membrane. N-linked (GlcNAc...) asparagine glycosylation is found at N66, N302, and N328.

This sequence belongs to the glycosyltransferase 11 family.

It is found in the golgi apparatus. The protein localises to the golgi stack membrane. It carries out the reaction a beta-D-galactosyl-(1-&gt;4)-N-acetyl-beta-D-glucosaminyl derivative + GDP-beta-L-fucose = an alpha-L-Fuc-(1-&gt;2)-beta-D-Gal-(1-&gt;4)-beta-D-GlcNAc derivative + GDP + H(+). The catalysed reaction is a ganglioside GA1 + GDP-beta-L-fucose = a ganglioside Fuc-GA1 + GDP + H(+). The enzyme catalyses a beta-D-Gal-(1-&gt;3)-beta-D-GlcNAc-(1-&gt;3)-beta-D-Gal-(1-&gt;4)-beta-D-Glc-(1&lt;-&gt;1')-Cer(d18:1(4E)) + GDP-beta-L-fucose = alpha-L-fucosyl-(1-&gt;2)- beta-D-galactosyl-(1-&gt;3)-N-acetyl-beta-D-glucosaminyl-(1-&gt;3)-beta-D-galactosyl-(1-&gt;4)-beta-D-glucosyl-(1&lt;-&gt;1')-N-acylsphing-4-enine + GDP + H(+). It catalyses the reaction a neolactoside nLc4Cer(d18:1(4E)) + GDP-beta-L-fucose = a neolactoside IV(2)-alpha-Fuc-nLc4Cer(d18:1(4E)) + GDP + H(+). It carries out the reaction a ganglioside GM1 + GDP-beta-L-fucose = a ganglioside Fuc-GM1 + GDP + H(+). The catalysed reaction is beta-D-galactosyl-(1-&gt;3)-N-acetyl-D-galactosamine + GDP-beta-L-fucose = alpha-L-fucosyl-(1-&gt;2)-beta-D-galactosyl-(1-&gt;3)-N-acetyl-D-galactosamine + GDP + H(+). It functions in the pathway protein modification; protein glycosylation. Catalyzes the transfer of L-fucose, from a guanosine diphosphate-beta-L-fucose, to the terminal galactose residue of glycoconjugates through an alpha(1,2) linkage leading to H antigen synthesis that is an intermediate substrate in the synthesis of ABO blood group antigens. H antigen is essential for maturation of the glomerular layer of the main olfactory bulb, in cell migration and early cell-cell contacts during tumor associated angiogenesis. Preferentially fucosylates soluble lactose and to a lesser extent fucosylates glycolipids gangliosides GA1 and GM1a. This Lagothrix lagotricha (Brown woolly monkey) protein is Galactoside alpha-(1,2)-fucosyltransferase 1.